We begin with the raw amino-acid sequence, 339 residues long: Anthranilate phosphoribosyltransferase (339 aa).

5-phospho-alpha-D-ribose 1-diphosphate is bound by residues Gly80, 83–84 (GD), Thr88, 90–93 (NIST), 108–116 (KHGNRSVSS), and Ser120. Position 80 (Gly80) interacts with anthranilate. Ser92 provides a ligand contact to Mg(2+). Asn111 provides a ligand contact to anthranilate. Arg166 serves as a coordination point for anthranilate. Residues Asp225 and Glu226 each contribute to the Mg(2+) site.

It belongs to the anthranilate phosphoribosyltransferase family. Homodimer. The cofactor is Mg(2+).

It carries out the reaction N-(5-phospho-beta-D-ribosyl)anthranilate + diphosphate = 5-phospho-alpha-D-ribose 1-diphosphate + anthranilate. The protein operates within amino-acid biosynthesis; L-tryptophan biosynthesis; L-tryptophan from chorismate: step 2/5. In terms of biological role, catalyzes the transfer of the phosphoribosyl group of 5-phosphorylribose-1-pyrophosphate (PRPP) to anthranilate to yield N-(5'-phosphoribosyl)-anthranilate (PRA). In Moorella thermoacetica (strain ATCC 39073 / JCM 9320), this protein is Anthranilate phosphoribosyltransferase.